A 560-amino-acid chain; its full sequence is Potassium-transporting ATPase potassium-binding subunit (560 aa).

Transmembrane regions (helical) follow at residues 11–31 (IFLL…VAFF), 63–83 (SYCT…YGLL), 134–154 (FVTM…TALI), 179–199 (LLPL…PQTF), 254–274 (VIEM…YGHA), 282–302 (WVLF…VYNA), 329–349 (FGIP…TGSV), 356–376 (LTPI…VFGG), 379–399 (VGFV…GLMV), 417–437 (LIVI…AIAL), 488–508 (VVML…AGSL), and 530–550 (VILF…VLIL).

The protein belongs to the KdpA family. As to quaternary structure, the system is composed of three essential subunits: KdpA, KdpB and KdpC.

The protein localises to the cell membrane. Functionally, part of the high-affinity ATP-driven potassium transport (or Kdp) system, which catalyzes the hydrolysis of ATP coupled with the electrogenic transport of potassium into the cytoplasm. This subunit binds the extracellular potassium ions and delivers the ions to the membrane domain of KdpB through an intramembrane tunnel. The sequence is that of Potassium-transporting ATPase potassium-binding subunit from Geobacillus kaustophilus (strain HTA426).